A 37-amino-acid chain; its full sequence is Large ribosomal subunit protein bL36 (37 aa).

It belongs to the bacterial ribosomal protein bL36 family.

In Nitratiruptor sp. (strain SB155-2), this protein is Large ribosomal subunit protein bL36.